Reading from the N-terminus, the 585-residue chain is Type IV pilus assembly ATPase TfpB (585 aa).

346–351 serves as a coordination point for ATP; that stretch reads GSGKTT. Residues C476, C479, C511, and C514 each coordinate Zn(2+).

Belongs to the GSP E family.

The protein localises to the cytoplasm. ATPase component of the type IV pilus (T4P). Acts as a molecular motor to provide the energy that is required for biogenesis of the pilus and the extrusion of substrates generated in the cytoplasm. TfpB is required for optimal T4P extension and, consequently, efficient natural transformation. May play a role in initiating T4P extension. This chain is Type IV pilus assembly ATPase TfpB, found in Acinetobacter baylyi (strain ATCC 33305 / BD413 / ADP1).